Reading from the N-terminus, the 910-residue chain is DNA repair and recombination protein RAD54B (910 aa).

Positions 1–14 (MRRSAAPSQLQGNS) are enriched in polar residues. Residues 1–33 (MRRSAAPSQLQGNSFKKPKFIPPGRSNPGLNEE) are disordered. The residue at position 14 (Ser14) is a Phosphoserine. The region spanning 313–480 (GMRMNGRCGA…FALIDFVNPG (168 aa)) is the Helicase ATP-binding domain. 326–333 (DEMGLGKT) provides a ligand contact to ATP. The short motif at 431–434 (DEGH) is the DEGH box element. A Helicase C-terminal domain is found at 649–810 (KLLAVIHELR…HIQFSVEELK (162 aa)).

Belongs to the SNF2/RAD54 helicase family. In terms of assembly, interacts with RAD51 through the NH2-terminal domain. Immunoprecipitation experiments show that the interaction is constitutive and not induced by ionizing radiation. The interaction may be indirect. In terms of tissue distribution, abundantly expressed in testis and spleen. Relatively low levels observed in thymus, prostate, ovary and colon.

The protein localises to the nucleus. Functionally, involved in DNA repair and mitotic recombination. May play an active role in recombination processes in concert with other members of the RAD52 epistasis group. In Homo sapiens (Human), this protein is DNA repair and recombination protein RAD54B (RAD54B).